We begin with the raw amino-acid sequence, 7570 residues long: Dystonin (7570 aa).

2 Calponin-homology (CH) domains span residues 35–138 (KVQK…LHFQ) and 151–255 (MSAK…DAFP). An actin-binding region spans residues 35 to 252 (KVQKKTFTKW…VITYVSSLYD (218 aa)). Phosphoserine occurs at positions 135, 184, 236, and 237. 2 Spectrin repeats span residues 602–699 (EINM…RHLD) and 701–802 (LHNF…QHIK). One can recognise an SH3 domain in the interval 887–944 (KTSIPIKAICDYRQIEITIYKDDECVLANNSHRAKWKVISPTGNEAMVPSVCFTVPPP). 2 Spectrin repeats span residues 1293-1422 (KYYR…KFAG) and 1440-1540 (KEHV…QESQ). S1382 is subject to Phosphoserine. A Nuclear localization signal; in isoform 6 motif is present at residues 1383–1389 (PVKRRRM). At E1565 the chain carries Phosphoserine. Plectin repeat units lie at residues 1584 to 1626 (IRLL…QLKE), 1660 to 1703 (KVLE…LERQ), 1774 to 1817 (RLLS…LTYQ), 1818 to 1855 (VQTG…LEAQ), and 1856 to 1891 (RGYV…KILN). A Phosphoserine modification is found at S2229. Disordered stretches follow at residues 2317 to 2346 (SNTS…IEEY), 2383 to 2441 (LLND…DETA), and 2585 to 2616 (DYIY…GKPR). Residues 2336–2345 (DKEDESEIEE) show a composition bias toward acidic residues. Residues 2385 to 2394 (NDQQNNTGTD) are compositionally biased toward low complexity. Acidic residues-rich tracts occupy residues 2395 to 2412 (TDSD…DDDH), 2430 to 2439 (YDTLQEENDE), and 2591 to 2605 (NDQD…DEEG). S2919 is modified (phosphoserine). A disordered region spans residues 3190–3221 (EASTVPSDSQMSDSSGVSPMTNSSELKPESRD). The span at 3192 to 3209 (STVPSDSQMSDSSGVSPM) shows a compositional bias: low complexity. 28 Spectrin repeats span residues 3395-3501 (LQHT…KQIM), 3643-3752 (QEYK…KELD), 3926-4040 (EKFD…NNLK), 4047-4153 (QHYE…EKLQ), 4160-4259 (LSVQ…ETLA), 4269-4368 (ELFE…EAVT), 4516-4621 (QKAQ…QKLE), 4628-4732 (TQFQ…DWID), 4742-4842 (QSLL…QHLQ), 4849-4951 (HQFQ…NKLK), 4958-5058 (LKYK…FCLE), 5068-5167 (QEVS…SFLE), 5174-5277 (GHFQ…EQVE), 5284-5388 (EEFY…AQLQ), 5395-5497 (GRFQ…RQLE), 5504-5715 (QQFH…KTLE), 5831-5933 (QQFD…LQLE), 5941-6041 (QFWE…VALD), 6048-6154 (TQFH…AKLL), 6161-6263 (EKFW…DKLE), 6270-6373 (VQYQ…HKLE), 6380-6482 (GQFQ…QQLD), 6489-6591 (KGFH…TKLE), 6598-6700 (MEFH…RSLD), 6707-6810 (KQFH…NKLE), 6817-6918 (GQFT…TRLE), 6925-7027 (EEFH…QRLA), and 7037-7167 (QELL…RKLN). S3968 bears the Phosphoserine mark. S4749 bears the Phosphoserine mark. K5470 participates in a covalent cross-link: Glycyl lysine isopeptide (Lys-Gly) (interchain with G-Cter in ubiquitin). 2 EF-hand domains span residues 7197–7232 (HKKS…SKFP) and 7233–7268 (TSRL…NKDA). D7210, D7212, D7214, K7216, E7221, D7246, D7248, D7250, Y7252, and E7257 together coordinate Ca(2+). Positions 7273-7351 (TDADKIEDEV…EFLVKNDPCR (79 aa)) constitute a GAR domain. Disordered stretches follow at residues 7358 to 7379 (KMLR…AKGR), 7395 to 7452 (SQGM…SKLR), and 7481 to 7570 (QFAD…SSKR). Positions 7362–7374 (SESNSSITTTQPT) are enriched in polar residues. Composition is skewed to low complexity over residues 7411–7441 (SSRG…TTTP) and 7490–7504 (SRPG…GSRA). Residue S7432 is modified to Phosphoserine. 3 positions are modified to phosphoserine: S7510, S7513, and S7525. Polar residues predominate over residues 7519-7535 (EIQSVCSDVETVPQTHR). A Microtubule tip localization signal motif is present at residues 7550–7553 (SKIP).

As to quaternary structure, homodimer. Isoform 1 interacts (via N-terminus) with PLEC (via N-terminus). Interacts with the neuronal intermediate filament protein, PRPH. Interacts with DES. Interacts with SYNE3. Isoform 1 and isoform 6 can homodimerize (via N-terminus). Isoform 1 interacts (via N-terminus) with ACTN2. Isoform 1 interacts (via N-terminus) with PLEC (via N-terminus). Isoform 3 interacts (via N-terminus) with COL17A1 (via cytoplasmic region). Isoform 3 interacts (via N-terminus) with ITGB4 isoform beta-4a (via cytoplasmic region). Isoform 3 interacts (via N-terminus) with ERBIN (via C-terminus). Isoform 3 associates (via C-terminal) with KRT5-KRT14 (via rod region) intermediate filaments of keratins. Interacts with MAPRE1; probably required for targeting to the growing microtubule plus ends. Interacts with TMIGD2. Isoform 9 interacts with TMEM108. Isoform 1 is expressed in myoblasts (at protein level). Isoform 3 is expressed in the skin. Isoform 6 is expressed in the brain. Highly expressed in skeletal muscle and cultured keratinocytes.

It is found in the cytoplasm. It localises to the cytoskeleton. Its subcellular location is the stress fiber. The protein resides in the cell projection. The protein localises to the axon. It is found in the myofibril. It localises to the sarcomere. Its subcellular location is the z line. The protein resides in the h zone. The protein localises to the cell junction. It is found in the hemidesmosome. It localises to the nucleus. Its subcellular location is the nucleus envelope. The protein resides in the membrane. The protein localises to the endoplasmic reticulum membrane. It is found in the cell cortex. It localises to the cell membrane. In terms of biological role, cytoskeletal linker protein. Acts as an integrator of intermediate filaments, actin and microtubule cytoskeleton networks. Required for anchoring either intermediate filaments to the actin cytoskeleton in neural and muscle cells or keratin-containing intermediate filaments to hemidesmosomes in epithelial cells. The proteins may self-aggregate to form filaments or a two-dimensional mesh. Regulates the organization and stability of the microtubule network of sensory neurons to allow axonal transport. Mediates docking of the dynein/dynactin motor complex to vesicle cargos for retrograde axonal transport through its interaction with TMEM108 and DCTN1. Plays a structural role in the assembly of hemidesmosomes of epithelial cells; anchors keratin-containing intermediate filaments to the inner plaque of hemidesmosomes. Required for the regulation of keratinocyte polarity and motility; mediates integrin ITGB4 regulation of RAC1 activity. Functionally, required for bundling actin filaments around the nucleus. Its function is as follows. Regulates the organization and stability of the microtubule network of sensory neurons to allow axonal transport. The chain is Dystonin from Homo sapiens (Human).